A 991-amino-acid polypeptide reads, in one-letter code: Phosphate metabolism protein 7 (991 aa).

Residues 1 to 9 (MADSSSTSA) are Extracellular-facing. A helical membrane pass occupies residues 10-30 (FISTLIIYGLTAVVFVWLFLL). The Cytoplasmic portion of the chain corresponds to 31 to 91 (LRPKNRRVYE…TSVDGYFLLR (61 aa)). Residues 92 to 112 (YIGIVGSLSFVGCLLLLPILL) traverse the membrane as a helical segment. The Extracellular portion of the chain corresponds to 113–138 (PVNATNGNNLQGFELLSFSNVTNKNR). N115 and N132 each carry an N-linked (GlcNAc...) asparagine glycan. The helical transmembrane segment at 139 to 159 (FYAHVFLSWIFFGLFTYVIYK) threads the bilayer. Residues 160 to 388 (ELYYYVVFRH…ERHSRRAVAN (229 aa)) are Cytoplasmic-facing. Residues 389–409 (TIMVLLIIFWAFPVAVVGIIS) traverse the membrane as a helical segment. The Extracellular portion of the chain corresponds to 410 to 437 (NVNFLTDKVPFLRFINNMPTFLMGVITG). The helical transmembrane segment at 438 to 458 (LLPTIALVVLMSLVPPFIVML) threads the bilayer. Residues 459–471 (GKLSGCVTRQETD) are Cytoplasmic-facing. The chain crosses the membrane as a helical span at residues 472-492 (LYSQAWYYAFAVIQIFLVVTA). Residues 493 to 523 (TSSASSTVDSIIDRPRSAMTLLANNLPKASN) are Extracellular-facing. A helical membrane pass occupies residues 524-544 (FYIMYFILKGLTGPTWTILQA). At 545–582 (VNLLLSKVLGRVLDSTPRQKWNRYNTLATPRMGIVYPG) the chain is on the cytoplasmic side. Residues 583–603 (IEILVCIYICYSIIAPILLFF) traverse the membrane as a helical segment. Position 604 (S604) is a topological domain, extracellular. The helical transmembrane segment at 605–625 (TVMLTLLYVAYLYNLNYVFGF) threads the bilayer. Topologically, residues 626–637 (SFDLKGRNYPRA) are cytoplasmic. The helical transmembrane segment at 638 to 658 (LFQIFVGIYLSEVCLLGLFIM) threads the bilayer. Topologically, residues 659-661 (AKT) are extracellular. The helical transmembrane segment at 662-682 (WGPLVLEVFWIVVTALAHIYM) threads the bilayer. Over 683-991 (KRKFIPLFDA…PPDYEPEAKK (309 aa)) the chain is Cytoplasmic. The interval 749 to 787 (KANLIPDNDGSSENGTPSNPFESGSERASLSGSNAESDS) is disordered. Residues 757–785 (DGSSENGTPSNPFESGSERASLSGSNAES) show a composition bias toward polar residues.

This sequence belongs to the CSC1 (TC 1.A.17) family.

Its subcellular location is the cell membrane. In terms of biological role, acts as an osmosensitive calcium-permeable cation channel. This is Phosphate metabolism protein 7 (PHM7) from Saccharomyces cerevisiae (strain ATCC 204508 / S288c) (Baker's yeast).